A 344-amino-acid polypeptide reads, in one-letter code: Thioredoxin reductase FGSG_00043 (344 aa).

Residues 12–15 (GGPA), 34–39 (DSVSYR), histidine 51, and alanine 121 contribute to the FAD site. Cysteines 165 and 168 form a disulfide. FAD is bound by residues aspartate 314 and 321 to 322 (FV).

Belongs to the class-II pyridine nucleotide-disulfide oxidoreductase family. As to quaternary structure, homodimer. The cofactor is FAD.

The protein operates within mycotoxin biosynthesis. Its function is as follows. Thioredoxin reductase; part of the gene cluster that mediates the biosynthesis of gramillins A and B, bicyclic lipopeptides that induce cell death in maize leaves but not in wheat leaves. The nonribosomal peptide synthetase GRA1 incorporates respectively a glutamic adic (Glu), a leucine (Leu), a serine (Ser), a hydroxyglutamine (HOGln), a 2-amino decanoic acid, and 2 cysteins (CysB and CysA). The biosynthesis of 2-amino decanoic acid incorporated in gramillins could be initiated by a fatty acid synthase composed of the alpha and beta subunits FGSG_00036 and FGSG_11656. The cytochrome P450 monooxygenase FGSG_15680 could hydroxylate the fatty acid chain. Subsequent oxidation to the ketone by the oxidoreductase FGSG_00048 and transamination by aminotransferase FGSG_00049 could form 2-amino-decanoic acid. On the other hand, FGSG_15680 could also be responsible for the HO-modified glutamine at the gamma-position. Whether hydroxylation occurs on the fully assembled product or on the Gln residue prior to assembly into the gramillins requires further proof. The thioredoxin FGSG_00043 could also be required for the disulfide-bond formation between CysA and CysB. The specific involvement of the remaining proteins from the cluster is more difficult to discern, but could have broader regulatory (FGSG_00040 and FGSG_11657) or enzymatic functions (FGSG_00044 and FGSG_00045). The final C-domain of GRA1 does not possess the expected sequence of a termination CT domain, often implicated in macrocyclization and release of a cyclopeptidein fungal NRPs; and the thioesterase FGSG_00047 may act in concert with the terminal C-domain of GRA1 to catalyze the formation of the macrocyclic anhydride and release of the products. This chain is Thioredoxin reductase FGSG_00043, found in Gibberella zeae (strain ATCC MYA-4620 / CBS 123657 / FGSC 9075 / NRRL 31084 / PH-1) (Wheat head blight fungus).